The sequence spans 333 residues: NADH-quinone oxidoreductase subunit H (333 aa).

The next 8 membrane-spanning stretches (helical) occupy residues 15–35, 88–108, 117–137, 159–179, 191–211, 239–259, 274–296, and 313–333; these read FFIF…FVTY, FILA…VIPF, IGVG…GVVT, ISYE…AGSL, VWYI…AVAE, WAFF…LITV, IPGA…WFRV, and VLLP…ELFF.

This sequence belongs to the complex I subunit 1 family. NDH-1 is composed of 14 different subunits. Subunits NuoA, H, J, K, L, M, N constitute the membrane sector of the complex.

Its subcellular location is the cell membrane. The catalysed reaction is a quinone + NADH + 5 H(+)(in) = a quinol + NAD(+) + 4 H(+)(out). Functionally, NDH-1 shuttles electrons from NADH, via FMN and iron-sulfur (Fe-S) centers, to quinones in the respiratory chain. The immediate electron acceptor for the enzyme in this species is believed to be ubiquinone. Couples the redox reaction to proton translocation (for every two electrons transferred, four hydrogen ions are translocated across the cytoplasmic membrane), and thus conserves the redox energy in a proton gradient. This subunit may bind ubiquinone. This is NADH-quinone oxidoreductase subunit H from Bacillus cereus (strain G9842).